We begin with the raw amino-acid sequence, 342 residues long: Ketoreductase nvfG (342 aa).

It belongs to the NAD(P)-dependent epimerase/dehydratase family. Dihydroflavonol-4-reductase subfamily.

Its pathway is secondary metabolite biosynthesis; terpenoid biosynthesis. Ketoreductase; part of the gene cluster that mediates the biosynthesis of novofumigatonin, a heavily oxygenated meroterpenoid containing a unique orthoester moiety. The first step of the pathway is the synthesis of 3,5-dimethylorsellinic acid (DMOA) by the polyketide synthase nvfA via condensation of one acetyl-CoA starter unit with 3 malonyl-CoA units and 2 methylations. DMOA is then converted to farnesyl-DMOA by the farnesyltransferase nvfB. Epoxydation by FAD-dependent monooxygenase nvfK, followed by a protonation-initiated cyclization catalyzed by the terpene cyclase nvfL leads to the production of asnavolin H. The short chain dehydrogenase nvfC then as a 3-OH dehydrogenase of asnovolin H to yield chemesin D. There are two branches to synthesize asnovolin A from chemesin D. In one branch, chemesin D undergoes Baeyer-Villiger oxidation by nvfH, methylation by nvfJ, and enoyl reduction by the nvfM D enoylreductase that reduces the double bond between C-5'and C-6', to form respectively asnovolin I, asnovolin K, and asnovolin A. In the other branch, the methylation precedes the Baeyer-Villiger oxidation and the enoyl reduction to yield asnovolin A via the asnovolin J intermediate. Asnovolin A is further converted to fumigatonoid A by the Fe(II)/2-oxoglutarate-dependent dioxygenase nvfI that catalyzes an endoperoxidation reaction. The alpha/beta hydrolase nvfD then acts as an epimerase that converts fumigatonoid A to its C-5' epimer, which then undergoes spontaneous or nvfD-catalyzed lactonization. The following step utilizes the ketoreductase nvfG to produce fumigatonoid B. The dioxygenase nvfE further converts fumigatonoid B into fumigatonoid C. Finally the Fe(II)/2-oxoglutarate-dependent dioxygenase nvfF catalyzes two rounds of oxidation to transform fumigatonoid C into the end product, novofumigatonin A. The chain is Ketoreductase nvfG from Aspergillus novofumigatus (strain IBT 16806).